A 308-amino-acid polypeptide reads, in one-letter code: Cytochrome c biogenesis protein CcsA (308 aa).

The next 7 membrane-spanning stretches (helical) occupy residues 2–22, 44–64, 71–91, 143–163, 212–232, 239–259, and 273–293; these read IVSTLEHILTHISFSIVSILI, GMLVTFFCITGLLATHWIYLG, LSESLIFLSWSFALIHSIAYF, MILGYAALLCGSLLSVALMVI, VIGLGFIFLTIGILSGAVWAN, WSWDPKETWAFITWIVFAIYL, and AIVASIGFLIIWICYFGVNLV.

This sequence belongs to the CcmF/CycK/Ccl1/NrfE/CcsA family. As to quaternary structure, may interact with Ccs1.

The protein localises to the plastid membrane. In terms of biological role, required during biogenesis of c-type cytochromes (cytochrome c6 and cytochrome f) at the step of heme attachment. This Cuscuta exaltata (Tall dodder) protein is Cytochrome c biogenesis protein CcsA.